A 318-amino-acid polypeptide reads, in one-letter code: Galactinol synthase 1 (318 aa).

Lysine 102 is an active-site residue. Mn(2+)-binding residues include aspartate 118, aspartate 120, and histidine 244.

It belongs to the glycosyltransferase 8 family. Galactosyltransferase subfamily. A divalent metal cation serves as cofactor. As to expression, expressed in seeds, mostly in radicle tips.

Its subcellular location is the cytoplasm. The enzyme catalyses myo-inositol + UDP-alpha-D-galactose = alpha-D-galactosyl-(1-&gt;3)-1D-myo-inositol + UDP + H(+). Functionally, galactinol synthase involved in the biosynthesis of raffinose family oligosaccharides (RFOs) that function as osmoprotectants. May promote plant stress tolerance. This Solanum lycopersicum (Tomato) protein is Galactinol synthase 1 (GOLS1).